A 581-amino-acid chain; its full sequence is 2-hydroxyacyl-CoA lyase 1 (581 aa).

A phosphoserine mark is found at Ser4 and Ser6. Glu63 contacts thiamine diphosphate. N6-succinyllysine is present on residues Lys354, Lys361, and Lys368. The thiamine pyrophosphate binding stretch occupies residues 404–487 (TMDIGRTMLQ…IILLVVNNNG (84 aa)). Asp458 and Asn485 together coordinate Mg(2+). Positions 579 to 581 (SNM) match the Microbody targeting signal motif.

It belongs to the TPP enzyme family. In terms of assembly, homotetramer. Mg(2+) is required as a cofactor. The cofactor is thiamine diphosphate. As to expression, predominanly expressed in liver.

It localises to the peroxisome. It carries out the reaction a 2-hydroxy-3-methyl fatty acyl-CoA = a 2-methyl-branched fatty aldehyde + formyl-CoA. It catalyses the reaction an (R)-2-hydroxy-long-chain-fatty acyl-CoA = a long-chain fatty aldehyde + formyl-CoA. The enzyme catalyses 2-hydroxy-3-methylhexadecanoyl-CoA = 2-methylpentadecanal + formyl-CoA. The catalysed reaction is 2-hydroxyoctadecanoyl-CoA = heptadecanal + formyl-CoA. It carries out the reaction 2-hydroxyphytanoyl-CoA = 2,6,10,14-tetramethylpentadecanal + formyl-CoA. The protein operates within lipid metabolism; fatty acid metabolism. Its function is as follows. Peroxisomal 2-OH acyl-CoA lyase involved in the cleavage (C1 removal) reaction in the fatty acid alpha-oxydation in a thiamine pyrophosphate (TPP)-dependent manner. Involved in the degradation of 3-methyl-branched fatty acids like phytanic acid and the shortening of 2-hydroxy long-chain fatty acids. Plays a significant role in the biosynthesis of heptadecanal in the liver. The sequence is that of 2-hydroxyacyl-CoA lyase 1 (Hacl1) from Mus musculus (Mouse).